Here is a 255-residue protein sequence, read N- to C-terminus: AA9 family lytic polysaccharide monooxygenase D (255 aa).

An N-terminal signal peptide occupies residues 1 to 19; the sequence is MYRTLGSIALLAGGAAAHG. Residues histidine 18 and histidine 92 each coordinate Cu(2+). Disulfide bonds link cysteine 65/cysteine 189 and cysteine 104/cysteine 111. Residue asparagine 152 is glycosylated (N-linked (GlcNAc...) asparagine). Residues histidine 178 and glutamine 184 each contribute to the O2 site. Tyrosine 186 serves as a coordination point for Cu(2+). Asparagine 220 carries an N-linked (GlcNAc...) asparagine glycan.

Belongs to the polysaccharide monooxygenase AA9 family. Cu(2+) serves as cofactor.

The protein resides in the secreted. The catalysed reaction is [(1-&gt;4)-beta-D-glucosyl]n+m + reduced acceptor + O2 = 4-dehydro-beta-D-glucosyl-[(1-&gt;4)-beta-D-glucosyl]n-1 + [(1-&gt;4)-beta-D-glucosyl]m + acceptor + H2O.. In terms of biological role, lytic polysaccharide monooxygenase (LPMO) that depolymerizes crystalline and amorphous polysaccharides via the oxidation of scissile alpha- or beta-(1-4)-glycosidic bonds, yielding specifically C1 oxidation product. Catalysis by LPMOs requires the reduction of the active-site copper from Cu(II) to Cu(I) by a reducing agent and H(2)O(2) or O(2) as a cosubstrate. Is active on regenerated amorphous cellulose (RAC) in the presence of ascorbic acid or 3-methylcatechol. Also acts on phosphoric acid swollen cellulose (PASC) as a substrate. This Thermothelomyces thermophilus (strain ATCC 42464 / BCRC 31852 / DSM 1799) (Sporotrichum thermophile) protein is AA9 family lytic polysaccharide monooxygenase D.